Consider the following 119-residue polypeptide: Large ribosomal subunit protein bL20 (119 aa).

It belongs to the bacterial ribosomal protein bL20 family.

In terms of biological role, binds directly to 23S ribosomal RNA and is necessary for the in vitro assembly process of the 50S ribosomal subunit. It is not involved in the protein synthesizing functions of that subunit. This chain is Large ribosomal subunit protein bL20, found in Xylella fastidiosa (strain M12).